The chain runs to 216 residues: Chloramphenicol acetyltransferase (216 aa).

Histidine 186 serves as the catalytic Proton acceptor.

This sequence belongs to the chloramphenicol acetyltransferase family. Homotrimer.

The enzyme catalyses chloramphenicol + acetyl-CoA = chloramphenicol 3-acetate + CoA. This enzyme is an effector of chloramphenicol resistance in bacteria. In Vibrio anguillarum (Listonella anguillarum), this protein is Chloramphenicol acetyltransferase (cat).